The sequence spans 268 residues: NAC domain-containing protein 41 (268 aa).

The 146-residue stretch at 15 to 160 (LPPGFRFHPT…NWVLCRVFLK (146 aa)) folds into the NAC domain. A DNA-binding region spans residues 109 to 166 (VGMKKTLVFYKGKPPNGTRTNWVLHEYRLVDSQQDSLYGQNMNWVLCRVFLKKRSNSN). A disordered region spans residues 166 to 190 (NSKRKEDEKEEVENEKETETERERE). The span at 180-190 (EKETETERERE) shows a compositional bias: basic and acidic residues.

It localises to the nucleus. In terms of biological role, transcription activator of the mannan synthase CSLA9. Recognizes and binds to DNA-specific sequence of CSLA9 promoter. The chain is NAC domain-containing protein 41 from Arabidopsis thaliana (Mouse-ear cress).